The following is a 287-amino-acid chain: Probable prolyl 4-hydroxylase 3 (287 aa).

The Cytoplasmic segment spans residues 1–16 (MAKLRHSRFQARKWST). A helical; Signal-anchor for type II membrane protein transmembrane segment spans residues 17–37 (LMLVLFMLFMLTIVLLMLLAF). Topologically, residues 38–287 (GVFSLPINND…KWMHVGEYKI (250 aa)) are lumenal. The Fe2OG dioxygenase domain maps to 159–282 (HGEGLQVLHY…KWSSTKWMHV (124 aa)). Fe cation contacts are provided by H177 and D179. N-linked (GlcNAc...) asparagine glycosylation occurs at N218. H263 contributes to the Fe cation binding site. K273 contacts 2-oxoglutarate.

The protein belongs to the P4HA family. Fe(2+) serves as cofactor. Requires L-ascorbate as cofactor.

The protein localises to the endoplasmic reticulum membrane. It catalyses the reaction L-prolyl-[collagen] + 2-oxoglutarate + O2 = trans-4-hydroxy-L-prolyl-[collagen] + succinate + CO2. Its function is as follows. Catalyzes the post-translational formation of 4-hydroxyproline in -Xaa-Pro-Gly- sequences in proline-rich peptide sequences of plant glycoproteins and other proteins. Hydroxyprolines are important constituent of many plant cell wall glycoproteins such as extensins, hydroxyproline-rich glycoproteins, lectins and arabinogalactan proteins. This is Probable prolyl 4-hydroxylase 3 from Arabidopsis thaliana (Mouse-ear cress).